A 135-amino-acid polypeptide reads, in one-letter code: MAKNSRSQWIAKNLQRLLNVGLIALAAILVVFLIKETFHLGKVLFVNNQDASSYMLIEGIVIYFLYFEFIALIVKYFESGYHFPLRYFIYIGITAIIRLIIVDHENPIDTLIYSGSILLLVVTLYLANTERLKRE.

The next 4 membrane-spanning stretches (helical) occupy residues 20–40 (VGLI…TFHL), 54–74 (YMLI…ALIV), 82–102 (HFPL…LIIV), and 107–127 (PIDT…LYLA).

It belongs to the PsiE family.

Its subcellular location is the cell inner membrane. The chain is Protein PsiE homolog from Yersinia enterocolitica serotype O:8 / biotype 1B (strain NCTC 13174 / 8081).